Reading from the N-terminus, the 276-residue chain is Ribosomal RNA small subunit methyltransferase A (276 aa).

S-adenosyl-L-methionine is bound by residues Asn-24, Leu-26, Gly-51, Glu-72, Asp-97, and Asn-118.

Belongs to the class I-like SAM-binding methyltransferase superfamily. rRNA adenine N(6)-methyltransferase family. RsmA subfamily.

The protein resides in the cytoplasm. The enzyme catalyses adenosine(1518)/adenosine(1519) in 16S rRNA + 4 S-adenosyl-L-methionine = N(6)-dimethyladenosine(1518)/N(6)-dimethyladenosine(1519) in 16S rRNA + 4 S-adenosyl-L-homocysteine + 4 H(+). Specifically dimethylates two adjacent adenosines (A1518 and A1519) in the loop of a conserved hairpin near the 3'-end of 16S rRNA in the 30S particle. May play a critical role in biogenesis of 30S subunits. The chain is Ribosomal RNA small subunit methyltransferase A from Clostridium acetobutylicum (strain ATCC 824 / DSM 792 / JCM 1419 / IAM 19013 / LMG 5710 / NBRC 13948 / NRRL B-527 / VKM B-1787 / 2291 / W).